Reading from the N-terminus, the 365-residue chain is 3-dehydroquinate synthase (365 aa).

NAD(+)-binding positions include aspartate 69–lysine 74, glycine 103–aspartate 107, threonine 127–threonine 128, lysine 140, and lysine 149. Residues glutamate 182, histidine 245, and histidine 262 each coordinate Zn(2+).

This sequence belongs to the sugar phosphate cyclases superfamily. Dehydroquinate synthase family. Requires Co(2+) as cofactor. It depends on Zn(2+) as a cofactor. The cofactor is NAD(+).

It is found in the cytoplasm. The enzyme catalyses 7-phospho-2-dehydro-3-deoxy-D-arabino-heptonate = 3-dehydroquinate + phosphate. Its pathway is metabolic intermediate biosynthesis; chorismate biosynthesis; chorismate from D-erythrose 4-phosphate and phosphoenolpyruvate: step 2/7. Catalyzes the conversion of 3-deoxy-D-arabino-heptulosonate 7-phosphate (DAHP) to dehydroquinate (DHQ). This chain is 3-dehydroquinate synthase, found in Pseudomonas entomophila (strain L48).